Here is a 496-residue protein sequence, read N- to C-terminus: Cytochrome P450 71AV8 (496 aa).

Residues 3–23 form a helical membrane-spanning segment; it reads ISIPTTLGLAVIIFIIFKLLT. Cysteine 432 is a binding site for heme.

Belongs to the cytochrome P450 family. Heme serves as cofactor.

The protein localises to the membrane. Valencene oxidase, which preferentially hydroylates the C2 position of (+)-valencene in the trans-orientation, producing trans-nootkatol that can be further oxidized to (+)-nootkatone. Can also catalyze the three-step conversion of germacrene A to germacra-1(10),4,11(13)-trien-12-oic acid and the partial conversion of the non-natural substrate amorpha-4,11-diene into artemisinic alcohol and artemisinic aldehyde. The polypeptide is Cytochrome P450 71AV8 (CYP71AV8) (Cichorium intybus (Chicory)).